The chain runs to 301 residues: J domain-containing protein 1 (301 aa).

The region spanning 58–150 is the J domain; it reads TPYDIFGIPK…KKKIVYDTTR (93 aa). A helical membrane pass occupies residues 208 to 228; that stretch reads WTVIGIICGLAICIEGTALLA.

Belongs to the DnaJ family.

The protein resides in the mitochondrion membrane. In terms of biological role, probable chaperone. In Saccharomyces cerevisiae (strain ATCC 204508 / S288c) (Baker's yeast), this protein is J domain-containing protein 1 (JID1).